Reading from the N-terminus, the 551-residue chain is Glucose-6-phosphate isomerase (551 aa).

Glu-352 serves as the catalytic Proton donor. Catalysis depends on residues His-383 and Lys-511.

It belongs to the GPI family.

It is found in the cytoplasm. The enzyme catalyses alpha-D-glucose 6-phosphate = beta-D-fructose 6-phosphate. It participates in carbohydrate biosynthesis; gluconeogenesis. Its pathway is carbohydrate degradation; glycolysis; D-glyceraldehyde 3-phosphate and glycerone phosphate from D-glucose: step 2/4. Functionally, catalyzes the reversible isomerization of glucose-6-phosphate to fructose-6-phosphate. The protein is Glucose-6-phosphate isomerase of Chlorobium luteolum (strain DSM 273 / BCRC 81028 / 2530) (Pelodictyon luteolum).